Consider the following 587-residue polypeptide: Aspartate--tRNA ligase (587 aa).

Glu173 is a binding site for L-aspartate. The segment at 197 to 200 (QTLK) is aspartate. Arg219 serves as a coordination point for L-aspartate. Residues 219–221 (RDE) and Gln228 contribute to the ATP site. Residue His446 participates in L-aspartate binding. Glu480 contributes to the ATP binding site. Arg487 contacts L-aspartate. Residue 532-535 (GLDR) coordinates ATP.

The protein belongs to the class-II aminoacyl-tRNA synthetase family. Type 1 subfamily. In terms of assembly, homodimer.

It is found in the cytoplasm. The catalysed reaction is tRNA(Asp) + L-aspartate + ATP = L-aspartyl-tRNA(Asp) + AMP + diphosphate. Catalyzes the attachment of L-aspartate to tRNA(Asp) in a two-step reaction: L-aspartate is first activated by ATP to form Asp-AMP and then transferred to the acceptor end of tRNA(Asp). The protein is Aspartate--tRNA ligase of Phocaeicola vulgatus (strain ATCC 8482 / DSM 1447 / JCM 5826 / CCUG 4940 / NBRC 14291 / NCTC 11154) (Bacteroides vulgatus).